Consider the following 486-residue polypeptide: MTGKRSKTNCRSASHKLFKDKAKNRVDDLQGMLLDLQFARKESRPTDVTLLEEQVNQMLREWKSELNEPSPASSLQQGGTLGSFSSDICRLLQLCDEEDDATSKLAAPKPEPADQNLEAGKAAVFQRGYNLVQGKSEHGLPLVDNCKDLSLAAGNNFDGTAPLEYHQQYDLQQEFEPNFNGGFNNCPSYGVVEGPIHISNFIPTICPPPSAFLGPKCALWDCPRPAQGFDWFQDYCSSFHAALAFNEGPPGMNPVVRPGGIGLKDGLLFAALSAKAGGKDVGIPECEGAATAKSPWNAPELFDLTVLESETLREWLFFDKPRRAFESGNRKQRSLPDYNGRGWHESRKQIMVEFGGLKRSYYMDPQPLHHFEWHLYEYEINKCDACALYRLELKLVDGKKTSKGKVSNDSVADLQKQMGRLTAEFPPENNTTNTTNNNKRCIKGRPKVSTKVATGNVQNTVEQANDYGVGEEFNYLVGNLSDYYIP.

Positions 208–405 are VOZ; it reads PPSAFLGPKC…VDGKKTSKGK (198 aa). Zn(2+)-binding residues include C217, C222, C236, and H240. The C3H1-type; atypical zinc finger occupies 217–240; sequence CALWDCPRPAQGFDWFQDYCSSFH. A disordered region spans residues 424–445; the sequence is EFPPENNTTNTTNNNKRCIKGR. Low complexity predominate over residues 429–438; sequence NNTTNTTNNN.

Homodimer. Interacts with phytochrome B (phyB). In terms of tissue distribution, ubiquitous. Expressed in the vascular bundles of various tissues, specifically in the phloem.

Its subcellular location is the cytoplasm. The protein resides in the nucleus. In terms of biological role, transcriptional activator acting positively in the phytochrome B signaling pathway. Functions redundantly with VOZ2 to promote flowering downstream of phytochrome B (phyB). Down-regulates 'FLOWERING LOCUS C' (FLC) and up-regulates 'FLOWERING LOCUS T' (FT). Binds to the 38-bp cis-acting region of the AVP1 gene. Interacts with phyB in the cytoplasm and is translocated to the nucleus at signal transmission, where it is subjected to degradation in a phytochrome-dependent manner. The polypeptide is Transcription factor VOZ1 (VOZ1) (Arabidopsis thaliana (Mouse-ear cress)).